The following is a 170-amino-acid chain: Thialysine N-epsilon-acetyltransferase (170 aa).

In terms of domain architecture, N-acetyltransferase spans 4-166 (VLIREAKEGD…FRFEGEAMRE (163 aa)). 27 to 28 (YE) lines the substrate pocket. An N6-acetyllysine modification is found at Lys29. Residue Glu92 coordinates substrate. Acetyl-CoA-binding positions include 94–96 (IYV), 102–107 (GQGIGS), 133–135 (NKK), and Tyr140. The active-site Proton donor is Tyr140. Glu152 serves as a coordination point for substrate.

The protein belongs to the acetyltransferase family. As to quaternary structure, homodimer.

The protein localises to the cytoplasm. It catalyses the reaction S-(2-aminoethyl)-L-cysteine + acetyl-CoA = S-(2-acetamidoethyl)-L-cysteine + CoA + H(+). It carries out the reaction an alkane-alpha,omega-diamine + acetyl-CoA = an N-acetylalkane-alpha,omega-diamine + CoA + H(+). Catalyzes the N-acetylation of the amino acid thialysine (S-(2-aminoethyl)-L-cysteine), a L-lysine analog with the 4-methylene group substituted with a sulfur. May also catalyze acetylation of polyamines, such as norspermidine, spermidine or spermine. However, ability to acetylate polyamines is weak, suggesting that it does not act as a diamine acetyltransferase in vivo. In Sus scrofa (Pig), this protein is Thialysine N-epsilon-acetyltransferase.